The chain runs to 445 residues: Phosphoglucosamine mutase (445 aa).

The active-site Phosphoserine intermediate is the Ser-99. Residues Ser-99, Asp-242, Asp-244, and Asp-246 each contribute to the Mg(2+) site. The residue at position 99 (Ser-99) is a Phosphoserine.

This sequence belongs to the phosphohexose mutase family. Mg(2+) serves as cofactor. Post-translationally, activated by phosphorylation.

The catalysed reaction is alpha-D-glucosamine 1-phosphate = D-glucosamine 6-phosphate. Catalyzes the conversion of glucosamine-6-phosphate to glucosamine-1-phosphate. The sequence is that of Phosphoglucosamine mutase from Helicobacter pylori (strain HPAG1).